We begin with the raw amino-acid sequence, 430 residues long: Glutamate-1-semialdehyde 2,1-aminomutase (430 aa).

N6-(pyridoxal phosphate)lysine is present on Lys265.

It belongs to the class-III pyridoxal-phosphate-dependent aminotransferase family. HemL subfamily. Homodimer. Requires pyridoxal 5'-phosphate as cofactor.

It localises to the cytoplasm. It carries out the reaction (S)-4-amino-5-oxopentanoate = 5-aminolevulinate. The protein operates within porphyrin-containing compound metabolism; protoporphyrin-IX biosynthesis; 5-aminolevulinate from L-glutamyl-tRNA(Glu): step 2/2. This Shewanella oneidensis (strain ATCC 700550 / JCM 31522 / CIP 106686 / LMG 19005 / NCIMB 14063 / MR-1) protein is Glutamate-1-semialdehyde 2,1-aminomutase.